The following is a 299-amino-acid chain: MADTVEFAKMNGLANKILVVDMRGRKDMVTPAAAIALNSNPATQFDQIMAIHDPRVGGTDAFIDILNCDGTKAQACGNGTRCVVQALSSETGKTSFTFQTVAGILNAVEHEDGMISVDMGLPRFRWSDIPLSEEFHDTSRIELQIGPIDAPILHSPAVMSMGNPHAIFWVDRDPMTFDLERFGPLLENHPMFPEKANITLAQVISDSALRTRTWERGAGLTLACGSAACASAVSAARTGRTGRKVTIDVASSPVRVPLTIDWREDNHVVMTGPAEWEWSGSVDPVTGVWARDAVERGAV.

3 residues coordinate substrate: Asn-15, Gln-47, and Asn-67. Cys-76 serves as the catalytic Proton donor. Substrate contacts are provided by residues 77–78, Asn-163, Asn-197, and 215–216; these read GN and ER. The Proton acceptor role is filled by Cys-224. Position 225–226 (225–226) interacts with substrate; the sequence is GS.

Belongs to the diaminopimelate epimerase family. Homodimer.

Its subcellular location is the cytoplasm. It carries out the reaction (2S,6S)-2,6-diaminopimelate = meso-2,6-diaminopimelate. It participates in amino-acid biosynthesis; L-lysine biosynthesis via DAP pathway; DL-2,6-diaminopimelate from LL-2,6-diaminopimelate: step 1/1. In terms of biological role, catalyzes the stereoinversion of LL-2,6-diaminopimelate (L,L-DAP) to meso-diaminopimelate (meso-DAP), a precursor of L-lysine and an essential component of the bacterial peptidoglycan. In Agrobacterium fabrum (strain C58 / ATCC 33970) (Agrobacterium tumefaciens (strain C58)), this protein is Diaminopimelate epimerase.